The following is a 129-amino-acid chain: MYDNLKSLGITNPDDIDRYSLRQEANNDILKIYFRKDKGEFFAKSVKFKYPRQRKTIVADNSGQGYKEINEISPNLRYVIDELDKICQQEQVEVDLKRKILDDLRHLESVVSNKITEIEADLEKLTKNR.

It belongs to the UPF0325 family.

This Pectobacterium carotovorum subsp. carotovorum (strain PC1) protein is UPF0325 protein PC1_0937.